Reading from the N-terminus, the 321-residue chain is Annexin B10 (321 aa).

Annexin repeat units lie at residues 15–86 (FDAS…GLMM), 87–158 (PPVE…LIVT), 171–243 (GQAK…AIVE), and 247–319 (SPAA…ALLG).

It belongs to the annexin family.

The sequence is that of Annexin B10 (AnxB10) from Drosophila melanogaster (Fruit fly).